Reading from the N-terminus, the 1218-residue chain is NACHT, LRR and PYD domains-containing protein 1a allele 1 (1218 aa).

Positions 1–61 (MEESQSKQES…SLPGWSSTSN (61 aa)) are disordered. Positions 7–29 (KQESNTRVAQHGSQQDVDPTFQT) are enriched in polar residues. The 310-residue stretch at 175–484 (QLVIIEGAAG…EFFAAMSYIL (310 aa)) folds into the NACHT domain. An ATP-binding site is contributed by 181 to 188 (GAAGIGKS). 3 LRR repeats span residues 343–364 (KERNTIIDFNLIGSIPVLLTLC), 673–693 (NLEELDLSGNPLSYSAVRSLC), and 730–750 (RLAELDLRLNDLGDNGVRQLC). A compositionally biased stretch (polar residues) spans 799-815 (TMPTENTDGEESLTSSK). The disordered stretch occupies residues 799–842 (TMPTENTDGEESLTSSKQQQQQSGDKHMEPLGTDDDFWGPSGPV). The ZU5 stretch occupies residues 835 to 968 (FWGPSGPVST…HFAVLENPSF (134 aa)). The FIIND domain maps to 835–1118 (FWGPSGPVST…LRPALPRMAS (284 aa)). Positions 969-1118 (SPMGVLLRMI…LRPALPRMAS (150 aa)) are UPA. Residues 1122–1211 (DAPALLHFVD…HLIMDLLEKS (90 aa)) enclose the CARD domain.

It belongs to the NLRP family. In terms of assembly, interacts (via LRR repeats) with BCL2 and BCL2L1 (via the loop between motifs BH4 and BH3). Interacts with NOD2; this interaction is enhanced in the presence of muramyl dipeptide (MDP) and increases IL1B release. Interacts with EIF2AK2/PKR; this interaction requires EIF2AK2 activity, is accompanied by EIF2AK2 autophosphorylation and promotes inflammasome assembly in response to danger-associated signals. Interacts with MEFV; this interaction targets Nlrp1a to degradation by autophagy, hence preventing excessive IL1B- and IL18-mediated inflammation. Interacts with DPP9; leading to inhibit activation of the inflammasome. DPP9 acts via formation of a ternary complex, composed of a DPP9 homodimer, one full-length NLRP1 protein, and one cleaved C-terminus of Nlrp1a (NACHT, LRR and PYD domains-containing protein 1a, C-terminus). Interacts with DPP8; leading to inhibit activation of the inflammasome, probably via formation of a ternary complex with DPP8. Interacts with the C-terminal part of Nlrp1a (NACHT, LRR and PYD domains-containing protein 1a, C-terminus) in absence of pathogens and other damage-associated signals. As to quaternary structure, interacts with the N-terminal part of Nlrp1a (NACHT, LRR and PYD domains-containing protein 1a, N-terminus) in absence of pathogens and other damage-associated signals. Homomultimer; forms the Nlrp1a inflammasome polymeric complex, a filament composed of homopolymers of this form in response to pathogens and other damage-associated signals. The Nlrp1a inflammasome polymeric complex directly recruits pro-caspase-1 (proCASP1) independently of PYCARD/ASC. Interacts (via CARD domain) with CASP1 (via CARD domain); leading to CASP1 activation. Autocatalytically cleaved. Autocatalytic cleavage in FIIND region occurs constitutively, prior to activation signals, and is required for inflammasome activity (IL1B release), possibly by facilitating CASP1 binding. Both N- and C-terminal parts remain associated non-covalently. In terms of processing, (Microbial infection) Cleavage by B.anthracis lethal toxin (LT) endopeptidase promotes ubiquitination and degradation of the N-terminal part, releasing the cleaved C-terminal part of the protein (NACHT, LRR and PYD domains-containing protein 1a, C-terminus), which polymerizes and forms the Nlrp1a inflammasome. Post-translationally, ubiquitinated in response to pathogen-associated signals, leading to its degradation by the proteasome and subsequent release of the cleaved C-terminal part of the protein (NACHT, LRR and PYD domains-containing protein 1a, C-terminus), which polymerizes and forms the Nlrp1a inflammasome.

The protein localises to the cytoplasm. The protein resides in the cytosol. It localises to the nucleus. Its subcellular location is the inflammasome. Activated by cleavage by B.anthracis lethal toxin (LT) endopeptidase. Cleavage by LT promotes ubiquitination and degradation of the N-terminal part, releasing the cleaved C-terminal part of the protein (NACHT, LRR and PYD domains-containing protein 1a, C-terminus), which polymerizes and forms the Nlrp1a inflammasome. Nlrp1a inflammasome is inhibited by DPP8 and DPP9, which sequester the C-terminal fragment of Nlrp1a (NACHT, LRR and PYD domains-containing protein 1a, C-terminus) in a ternary complex, thereby preventing Nlrp1a oligomerization and activation. Nlrp1a inflammasome is weakly activated by Val-boroPro (Talabostat, PT-100), an inhibitor of dipeptidyl peptidases DPP8 and DPP9. Val-boroPro relieves inhibition of DPP8 and/or DPP9 by promoting disruption of the ternary complex, releasing its C-terminal part from autoinhibition. Weakly activated by Toxoplasma gondii. In terms of biological role, acts as the sensor component of the Nlrp1a inflammasome, which mediates inflammasome activation in response to various pathogen-associated signals, leading to subsequent pyroptosis. Inflammasomes are supramolecular complexes that assemble in the cytosol in response to pathogens and other damage-associated signals and play critical roles in innate immunity and inflammation. Acts as a recognition receptor (PRR): recognizes specific pathogens and other damage-associated signals, such as B.anthracis lethal toxin (LT) or Val-boroPro inhibitor, and mediates the formation of the inflammasome polymeric complex. In response to pathogen-associated signals, the N-terminal part of Nlrp1a is degraded by the proteasome, releasing the cleaved C-terminal part of the protein (NACHT, LRR and PYD domains-containing protein 1a, C-terminus), which polymerizes to initiate the formation of the inflammasome complex: the inflammasome directly recruits pro-caspase-1 (proCASP1) independently of PYCARD/ASC and promotes caspase-1 (CASP1) activation, which subsequently cleaves and activates inflammatory cytokines IL1B and IL18 and gasdermin-D (GSDMD), leading to pyroptosis. In the absence of GSDMD expression, the Nlrp1a inflammasome is able to recruit and activate CASP8, leading to activation of gasdermin-E (GSDME). Constitutes the precursor of the Nlrp1a inflammasome, which mediates autoproteolytic processing within the FIIND domain to generate the N-terminal and C-terminal parts, which are associated non-covalently in absence of pathogens and other damage-associated signals. Functionally, regulatory part that prevents formation of the Nlrp1a inflammasome: in absence of pathogens and other damage-associated signals, interacts with the C-terminal part of Nlrp1a (NACHT, LRR and PYD domains-containing protein 1a, C-terminus), preventing activation of the Nlrp1a inflammasome. In response to pathogen-associated signals, this part is ubiquitinated by the N-end rule pathway and degraded by the proteasome, releasing the cleaved C-terminal part of the protein, which polymerizes and forms the Nlrp1a inflammasome. Its function is as follows. Constitutes the active part of the Nlrp1a inflammasome. In absence of pathogens and other damage-associated signals, interacts with the N-terminal part of Nlrp1a (NACHT, LRR and PYD domains-containing protein 1a, N-terminus), preventing activation of the Nlrp1a inflammasome. In response to pathogen-associated signals, the N-terminal part of Nlrp1a is degraded by the proteasome, releasing this form, which polymerizes to form the Nlrp1a inflammasome complex: the Nlrp1a inflammasome complex then directly recruits pro-caspase-1 (proCASP1) and promotes caspase-1 (CASP1) activation, leading to gasdermin-D (GSDMD) cleavage and subsequent pyroptosis. This chain is NACHT, LRR and PYD domains-containing protein 1a allele 1, found in Rattus norvegicus (Rat).